The following is a 312-amino-acid chain: tRNA uridine(34) hydroxylase (312 aa).

The 95-residue stretch at S123 to S217 folds into the Rhodanese domain. The Cysteine persulfide intermediate role is filled by C177. The span at A282–R293 shows a compositional bias: basic and acidic residues. Residues A282–N312 are disordered.

This sequence belongs to the TrhO family.

The enzyme catalyses uridine(34) in tRNA + AH2 + O2 = 5-hydroxyuridine(34) in tRNA + A + H2O. Functionally, catalyzes oxygen-dependent 5-hydroxyuridine (ho5U) modification at position 34 in tRNAs. The protein is tRNA uridine(34) hydroxylase of Pseudomonas aeruginosa (strain UCBPP-PA14).